Reading from the N-terminus, the 553-residue chain is Dihydroxy-acid dehydratase (553 aa).

Asp78 lines the Mg(2+) pocket. Residue Cys119 participates in [2Fe-2S] cluster binding. Asp120 and Lys121 together coordinate Mg(2+). Position 121 is an N6-carboxylysine (Lys121). Residue Cys193 coordinates [2Fe-2S] cluster. Glu441 is a Mg(2+) binding site. Residue Ser467 is the Proton acceptor of the active site.

Belongs to the IlvD/Edd family. Homodimer. [2Fe-2S] cluster serves as cofactor. It depends on Mg(2+) as a cofactor.

The enzyme catalyses (2R)-2,3-dihydroxy-3-methylbutanoate = 3-methyl-2-oxobutanoate + H2O. It carries out the reaction (2R,3R)-2,3-dihydroxy-3-methylpentanoate = (S)-3-methyl-2-oxopentanoate + H2O. It functions in the pathway amino-acid biosynthesis; L-isoleucine biosynthesis; L-isoleucine from 2-oxobutanoate: step 3/4. The protein operates within amino-acid biosynthesis; L-valine biosynthesis; L-valine from pyruvate: step 3/4. Functions in the biosynthesis of branched-chain amino acids. Catalyzes the dehydration of (2R,3R)-2,3-dihydroxy-3-methylpentanoate (2,3-dihydroxy-3-methylvalerate) into 2-oxo-3-methylpentanoate (2-oxo-3-methylvalerate) and of (2R)-2,3-dihydroxy-3-methylbutanoate (2,3-dihydroxyisovalerate) into 2-oxo-3-methylbutanoate (2-oxoisovalerate), the penultimate precursor to L-isoleucine and L-valine, respectively. This chain is Dihydroxy-acid dehydratase, found in Geobacter sp. (strain M21).